A 904-amino-acid chain; its full sequence is Structural polyprotein (904 aa).

Disordered regions lie at residues 1-27, 35-54, and 320-348; these read ADQE…VETE, VETP…SARS, and NNSN…KIGP. Positions 39–53 are enriched in polar residues; that stretch reads NRINTPMAQDTSSAR. A compositionally biased stretch (basic and acidic residues) spans 329–343; sequence VKEKTKNIPKPKTEN.

The protein belongs to the picornaviruses polyprotein family. Post-translationally, specific enzymatic cleavages in vivo yield mature proteins.

The protein resides in the virion. Its subcellular location is the host cytoplasm. Functionally, structural polyprotein: precursor of all the viral capsid proteins. In terms of biological role, forms, together with protein VP2 and protein VP3, an icosahedral capsid protecting the viral RNA genome. The icosahedral capsid has a pseudo-T=3 symmetry with a diameter of approximately 300 Angstroms, and is composed of 60 copies of each capsid proteins. Forms, together with protein VP1 and protein VP3, an icosahedral capsid protecting the viral RNA genome. The icosahedral capsid has a pseudo-T=3 symmetry with a diameter of approximately 300 Angstroms, and is composed of 60 copies of each capsid proteins. Its function is as follows. Forms, together with protein VP1 and protein VP2, an icosahedral capsid protecting the viral RNA genome. The icosahedral capsid has a pseudo-T=3 symmetry with a diameter of approximately 300 Angstroms, and is composed of 60 copies of each capsid proteins. In Apis mellifera (Honeybee), this protein is Structural polyprotein.